Consider the following 164-residue polypeptide: Phosphopantetheine adenylyltransferase (164 aa).

Thr-10 contacts substrate. ATP-binding positions include 10–11 (TF) and His-18. Substrate contacts are provided by Lys-42, Leu-74, and Arg-88. ATP-binding positions include 89–91 (GIR), Glu-99, and 124–130 (NSFISST).

It belongs to the bacterial CoaD family. Homohexamer. Requires Mg(2+) as cofactor.

It is found in the cytoplasm. The catalysed reaction is (R)-4'-phosphopantetheine + ATP + H(+) = 3'-dephospho-CoA + diphosphate. The protein operates within cofactor biosynthesis; coenzyme A biosynthesis; CoA from (R)-pantothenate: step 4/5. Its function is as follows. Reversibly transfers an adenylyl group from ATP to 4'-phosphopantetheine, yielding dephospho-CoA (dPCoA) and pyrophosphate. This Pseudoalteromonas translucida (strain TAC 125) protein is Phosphopantetheine adenylyltransferase.